We begin with the raw amino-acid sequence, 130 residues long: Protein lgg-2 (130 aa).

Glycine 130 carries Phosphatidylethanolamine amidated glycine lipidation.

Belongs to the ATG8 family. As to quaternary structure, may interact with vps-39. Interacts with lgg-3; the interaction is direct. Interacts with atg-16.1 (via WD domain) and atg-16.2 (via WD 5-6 repeats); the interactions are direct. Interacts with sepa-1 (via the LIR motifs); the interaction is direct. Interacts with sqst-1 (via the LIR motifs); the interaction is direct. Interacts with epg-2 (via the LIR motifs); the interaction is weak. Interacts with atg-7; the interaction is direct. Interacts with atg-3. The interaction with atg-7 and atg-3 may be required for the lipidation of lgg-2. Post-translationally, this protein is subject to lipidation. Lipidation is regulated by lgg-1.

The protein localises to the cytoplasmic vesicle. It is found in the autophagosome. Its subcellular location is the cytoplasm. It localises to the cell membrane. Functionally, ubiquitin-like modifier involved in the formation of autophagosomal vacuoles (autophagosomes). When lipidated mediates tethering between adjacent membranes and stimulates membrane fusion. Less effective at promoting membrane fusion than lgg-1. Acts upstream of the autophagy protein epg-5 in the aggrephagy pathway, which is the macroautophagic degradation of ubiquitinated protein aggregates, and preferentially interacts with autophagy proteins and substrates containing LIR motifs to mediate autophagosome formation and protein aggregate degradation. In particular binds to components of an atg-5-lgg-3-atg-16 complex to regulate autophagosome formation and cargo sequestration. Required for the degradation of specific sqst-1-containing aggregates during embryogenesis and the early stages of larval development. Involved in allophagy, which is an autophagic process in which paternal mitochondria and organelles are degraded during fertilization, and moreover is required for the degradation of lgg-1-positive allophagic autophagosomes in embryos. Involved in xenophagy, the autophagy-mediated degradation of pathogens and pathogen products, such as toxins. Also plays a role in membrane-pore repair. Through HOPS complex subunit vps-39, tethers lysosomes with autophagosomes to form autolysosomes. Plays a role in the distribution and clearance of germ cell specific P-granules from somatic cells to ensure exclusive localization of the P-granules in germ cells. Essential for dauer development and life-span extension. This chain is Protein lgg-2, found in Caenorhabditis elegans.